We begin with the raw amino-acid sequence, 228 residues long: Ribosomal RNA small subunit methyltransferase G (228 aa).

Residues Gly89, Leu94, Val140 to Glu141, and Arg159 each bind S-adenosyl-L-methionine.

The protein belongs to the methyltransferase superfamily. RNA methyltransferase RsmG family.

It localises to the cytoplasm. The enzyme catalyses guanosine(527) in 16S rRNA + S-adenosyl-L-methionine = N(7)-methylguanosine(527) in 16S rRNA + S-adenosyl-L-homocysteine. Its function is as follows. Specifically methylates the N7 position of guanine in position 527 of 16S rRNA. The sequence is that of Ribosomal RNA small subunit methyltransferase G from Burkholderia cenocepacia (strain HI2424).